Reading from the N-terminus, the 301-residue chain is tRNA uridine(34) hydroxylase (301 aa).

The Rhodanese domain maps to 120-214 (SAPDVAVIDT…YLEDVPEDQS (95 aa)). Cys174 serves as the catalytic Cysteine persulfide intermediate.

This sequence belongs to the TrhO family.

The enzyme catalyses uridine(34) in tRNA + AH2 + O2 = 5-hydroxyuridine(34) in tRNA + A + H2O. Catalyzes oxygen-dependent 5-hydroxyuridine (ho5U) modification at position 34 in tRNAs. This Jannaschia sp. (strain CCS1) protein is tRNA uridine(34) hydroxylase.